The primary structure comprises 193 residues: Holliday junction branch migration complex subunit RuvA (193 aa).

Residues methionine 1–leucine 64 are domain I. Positions threonine 65–methionine 139 are domain II. The segment at methionine 139–alanine 143 is flexible linker. A domain III region spans residues serine 144–alanine 193.

It belongs to the RuvA family. Homotetramer. Forms an RuvA(8)-RuvB(12)-Holliday junction (HJ) complex. HJ DNA is sandwiched between 2 RuvA tetramers; dsDNA enters through RuvA and exits via RuvB. An RuvB hexamer assembles on each DNA strand where it exits the tetramer. Each RuvB hexamer is contacted by two RuvA subunits (via domain III) on 2 adjacent RuvB subunits; this complex drives branch migration. In the full resolvosome a probable DNA-RuvA(4)-RuvB(12)-RuvC(2) complex forms which resolves the HJ.

The protein resides in the cytoplasm. The RuvA-RuvB-RuvC complex processes Holliday junction (HJ) DNA during genetic recombination and DNA repair, while the RuvA-RuvB complex plays an important role in the rescue of blocked DNA replication forks via replication fork reversal (RFR). RuvA specifically binds to HJ cruciform DNA, conferring on it an open structure. The RuvB hexamer acts as an ATP-dependent pump, pulling dsDNA into and through the RuvAB complex. HJ branch migration allows RuvC to scan DNA until it finds its consensus sequence, where it cleaves and resolves the cruciform DNA. This chain is Holliday junction branch migration complex subunit RuvA, found in Paraburkholderia phymatum (strain DSM 17167 / CIP 108236 / LMG 21445 / STM815) (Burkholderia phymatum).